A 76-amino-acid polypeptide reads, in one-letter code: Bowman-Birk type proteinase inhibitor DE-4 (76 aa).

Disulfide bonds link Cys-15/Cys-69, Cys-16/Cys-31, Cys-19/Cys-65, Cys-21/Cys-29, Cys-39/Cys-46, Cys-43/Cys-58, and Cys-48/Cys-56.

It belongs to the Bowman-Birk serine protease inhibitor family.

The sequence is that of Bowman-Birk type proteinase inhibitor DE-4 from Macrotyloma axillare (Perennial horse gram).